Consider the following 418-residue polypeptide: UDP-N-acetylglucosamine 1-carboxyvinyltransferase (418 aa).

22 to 23 (KN) contributes to the phosphoenolpyruvate binding site. Arg92 is a binding site for UDP-N-acetyl-alpha-D-glucosamine. The Proton donor role is filled by Cys116. 2-(S-cysteinyl)pyruvic acid O-phosphothioketal is present on Cys116. UDP-N-acetyl-alpha-D-glucosamine is bound by residues 121–125 (RPIDL), Asp305, and Leu327.

This sequence belongs to the EPSP synthase family. MurA subfamily.

It localises to the cytoplasm. It catalyses the reaction phosphoenolpyruvate + UDP-N-acetyl-alpha-D-glucosamine = UDP-N-acetyl-3-O-(1-carboxyvinyl)-alpha-D-glucosamine + phosphate. It participates in cell wall biogenesis; peptidoglycan biosynthesis. Cell wall formation. Adds enolpyruvyl to UDP-N-acetylglucosamine. The sequence is that of UDP-N-acetylglucosamine 1-carboxyvinyltransferase from Campylobacter lari (strain RM2100 / D67 / ATCC BAA-1060).